A 148-amino-acid chain; its full sequence is Multiprotein-bridging factor 1 (148 aa).

The interval 1 to 97 (MSDWDTVTKI…AKGWAQKDLS (97 aa)) is disordered. An HTH cro/C1-type domain is found at 82 to 136 (IQKGRQAKGWAQKDLSQRINEKPQVVNDYESGRAIPNQQVLSKMERALGIKLRGQ). Residues 93-112 (QKDLSQRINEKPQVVNDYES) constitute a DNA-binding region (H-T-H motif).

The protein belongs to the MBF1 family.

Transcriptional coactivator that stimulates GCN4-dependent transcriptional activity by bridging the DNA-binding region of GCN4 and TBP (SPT15), thereby recruiting TBP to GCN4-bound promoters. Involved in induction of the ribosome quality control (RQC) pathway; a pathway that degrades nascent peptide chains during problematic translation. Required to prevent stalled ribosomes from frameshifting. The polypeptide is Multiprotein-bridging factor 1 (mbf1) (Schizosaccharomyces pombe (strain 972 / ATCC 24843) (Fission yeast)).